Consider the following 362-residue polypeptide: 3-dehydroquinate synthase (362 aa).

NAD(+) is bound by residues 71–76 (DGEQYK), 105–109 (GVIGD), 129–130 (TT), Lys-142, Lys-151, and 169–172 (CLQT). Zn(2+) is bound by residues Glu-184, His-247, and His-264.

Belongs to the sugar phosphate cyclases superfamily. Dehydroquinate synthase family. Co(2+) is required as a cofactor. The cofactor is Zn(2+). NAD(+) serves as cofactor.

The protein localises to the cytoplasm. It carries out the reaction 7-phospho-2-dehydro-3-deoxy-D-arabino-heptonate = 3-dehydroquinate + phosphate. It functions in the pathway metabolic intermediate biosynthesis; chorismate biosynthesis; chorismate from D-erythrose 4-phosphate and phosphoenolpyruvate: step 2/7. Catalyzes the conversion of 3-deoxy-D-arabino-heptulosonate 7-phosphate (DAHP) to dehydroquinate (DHQ). The sequence is that of 3-dehydroquinate synthase from Cronobacter sakazakii (strain ATCC BAA-894) (Enterobacter sakazakii).